The sequence spans 99 residues: Integration host factor subunit alpha (99 aa).

Residues 49–73 (FGNFDLRDKNQRPGRNPKTGEDIPI) form a disordered region.

It belongs to the bacterial histone-like protein family. In terms of assembly, heterodimer of an alpha and a beta chain.

Functionally, this protein is one of the two subunits of integration host factor, a specific DNA-binding protein that functions in genetic recombination as well as in transcriptional and translational control. This Shigella boydii serotype 18 (strain CDC 3083-94 / BS512) protein is Integration host factor subunit alpha.